Consider the following 295-residue polypeptide: Small ribosomal subunit protein uS2 (295 aa).

Residues 261–295 (QAKKFSKTKNIDEETNTEFEQVLNDADENKNSDNA) are disordered.

It belongs to the universal ribosomal protein uS2 family.

The chain is Small ribosomal subunit protein uS2 from Rickettsia rickettsii (strain Sheila Smith).